The following is a 69-amino-acid chain: Alpha-conotoxin-like Tx1 (69 aa).

The signal sequence occupies residues 1–21; it reads MGMRMMFVVFLLVVLASTVVS. A propeptide spanning residues 22 to 49 is cleaved from the precursor; it reads STSGRRAFHGRNAAAKASGLVSLTDRRP. 2 disulfides stabilise this stretch: Cys-51–Cys-57 and Cys-52–Cys-65. Positions 53 to 55 are ser-Xaa-Pro motif, crucial for potent interaction with nAChR; it reads SDP. Residue Gly-66 is modified to Glycine amide.

The protein belongs to the conotoxin A superfamily. Expressed by the venom duct.

The protein localises to the secreted. In terms of biological role, alpha-conotoxins act on postsynaptic membranes, they bind to the nicotinic acetylcholine receptors (nAChR) and thus inhibit them. This Conus textile (Cloth-of-gold cone) protein is Alpha-conotoxin-like Tx1.